The sequence spans 650 residues: Acetyl-coenzyme A synthetase (650 aa).

Residues 191-194, T311, and N335 each bind CoA; that span reads RGGR. ATP contacts are provided by residues 387-389, 411-416, D500, and R515; these read GEP and DTWWQT. S523 lines the CoA pocket. R526 is an ATP binding site. Mg(2+) contacts are provided by V537, H539, and V542. Residue R584 coordinates CoA. N6-acetyllysine is present on K609.

This sequence belongs to the ATP-dependent AMP-binding enzyme family. It depends on Mg(2+) as a cofactor. In terms of processing, acetylated. Deacetylation by the SIR2-homolog deacetylase activates the enzyme.

The catalysed reaction is acetate + ATP + CoA = acetyl-CoA + AMP + diphosphate. In terms of biological role, catalyzes the conversion of acetate into acetyl-CoA (AcCoA), an essential intermediate at the junction of anabolic and catabolic pathways. AcsA undergoes a two-step reaction. In the first half reaction, AcsA combines acetate with ATP to form acetyl-adenylate (AcAMP) intermediate. In the second half reaction, it can then transfer the acetyl group from AcAMP to the sulfhydryl group of CoA, forming the product AcCoA. The polypeptide is Acetyl-coenzyme A synthetase (Shewanella sediminis (strain HAW-EB3)).